The sequence spans 413 residues: Alpha-1-antitrypsin-like protein CM55-SI (413 aa).

Positions 1 to 24 are cleaved as a signal peptide; the sequence is MPSSISWGLLLLAALSCLGPGSLA. At Q25 the chain carries Pyrrolidone carboxylic acid. N65, N102, N165, and N266 each carry an N-linked (GlcNAc...) asparagine glycan. Positions 368 to 387 are RCL; it reads GGTVLGNIRSILRYEVIFDR.

The protein belongs to the serpin family. As to expression, expressed in liver.

The polypeptide is Alpha-1-antitrypsin-like protein CM55-SI (Tamias sibiricus (Siberian chipmunk)).